Here is a 150-residue protein sequence, read N- to C-terminus: Major facilitator superfamily domain-containing 14C pseudogene (150 aa).

The interval 1–25 (MSVEPPPELEEKAASEPEAGAMPEK) is disordered. At 1 to 49 (MSVEPPPELEEKAASEPEAGAMPEKRAGAQAAGSTWLQGFGPPSVYHAA) the chain is on the extracellular side. The chain crosses the membrane as a helical span at residues 50 to 70 (IVIFLEFFAWGLLTTPMLTVL). Topologically, residues 71–82 (HETFSQHTFLMN) are cytoplasmic. The chain crosses the membrane as a helical span at residues 83 to 103 (GLIQGVKGLLSFLSAPLIGAL). Residues 104 to 111 (SDVWGRKP) lie on the Extracellular side of the membrane. The helical transmembrane segment at 112–132 (FLLGTVFFTCFPIPLMRISPC) threads the bilayer. The Cytoplasmic portion of the chain corresponds to 133–150 (RVWWRAPVVPATCGRRMA).

It belongs to the major facilitator superfamily.

The protein localises to the membrane. The chain is Major facilitator superfamily domain-containing 14C pseudogene from Homo sapiens (Human).